The chain runs to 59 residues: UPF0391 membrane protein AZC_4184 (59 aa).

Helical transmembrane passes span 4-24 (WALT…TAVA) and 30-50 (IAKI…VMGF).

It belongs to the UPF0391 family.

Its subcellular location is the cell membrane. The sequence is that of UPF0391 membrane protein AZC_4184 from Azorhizobium caulinodans (strain ATCC 43989 / DSM 5975 / JCM 20966 / LMG 6465 / NBRC 14845 / NCIMB 13405 / ORS 571).